A 577-amino-acid polypeptide reads, in one-letter code: Arginine--tRNA ligase (577 aa).

A 'HIGH' region motif is present at residues 122–132; that stretch reads PNVAKEMHVGH.

Belongs to the class-I aminoacyl-tRNA synthetase family. Monomer.

It is found in the cytoplasm. The catalysed reaction is tRNA(Arg) + L-arginine + ATP = L-arginyl-tRNA(Arg) + AMP + diphosphate. The chain is Arginine--tRNA ligase from Salmonella gallinarum (strain 287/91 / NCTC 13346).